We begin with the raw amino-acid sequence, 240 residues long: Uridylate kinase (240 aa).

Residue 12–15 participates in ATP binding; sequence KLSG. Residues 20 to 25 form an involved in allosteric activation by GTP region; sequence GDQGYG. Position 54 (G54) interacts with UMP. Positions 55 and 59 each coordinate ATP. UMP contacts are provided by residues D74 and 135-142; that span reads TGNPYFST. Residues N163, Y169, and D172 each contribute to the ATP site.

The protein belongs to the UMP kinase family. Homohexamer.

The protein resides in the cytoplasm. It catalyses the reaction UMP + ATP = UDP + ADP. It functions in the pathway pyrimidine metabolism; CTP biosynthesis via de novo pathway; UDP from UMP (UMPK route): step 1/1. Allosterically activated by GTP. Inhibited by UTP. Functionally, catalyzes the reversible phosphorylation of UMP to UDP. In Oceanobacillus iheyensis (strain DSM 14371 / CIP 107618 / JCM 11309 / KCTC 3954 / HTE831), this protein is Uridylate kinase.